We begin with the raw amino-acid sequence, 270 residues long: Phosphodiesterase YaeI (270 aa).

A divalent metal cation is bound by residues aspartate 56, histidine 58, aspartate 88, asparagine 120, histidine 209, and histidine 211.

The protein belongs to the metallophosphoesterase superfamily. A divalent metal cation serves as cofactor.

Shows phosphodiesterase activity, hydrolyzing phosphodiester bond in the artificial chromogenic substrate bis-p-nitrophenyl phosphate (bis-pNPP). The polypeptide is Phosphodiesterase YaeI (yaeI) (Escherichia coli (strain K12)).